A 234-amino-acid chain; its full sequence is Orotate phosphoribosyltransferase (234 aa).

Residue Lys-30 coordinates 5-phospho-alpha-D-ribose 1-diphosphate. 38 to 39 (FF) is an orotate binding site. Residues 80–81 (YK), Arg-110, Lys-111, Lys-114, His-116, and 136–144 (DDVITAGTA) each bind 5-phospho-alpha-D-ribose 1-diphosphate. Orotate contacts are provided by Thr-140 and Arg-168.

Belongs to the purine/pyrimidine phosphoribosyltransferase family. PyrE subfamily. Homodimer.

The catalysed reaction is orotidine 5'-phosphate + diphosphate = orotate + 5-phospho-alpha-D-ribose 1-diphosphate. Its pathway is pyrimidine metabolism; UMP biosynthesis via de novo pathway; UMP from orotate: step 1/2. Functionally, catalyzes the transfer of a ribosyl phosphate group from 5-phosphoribose 1-diphosphate to orotate, leading to the formation of orotidine monophosphate (OMP). The sequence is that of Orotate phosphoribosyltransferase (URA5) from Metarhizium anisopliae (Entomophthora anisopliae).